The primary structure comprises 497 residues: Catalase-2 (497 aa).

Active-site residues include His-71 and Asn-144. Position 354 (Tyr-354) interacts with heme.

This sequence belongs to the catalase family. It depends on heme as a cofactor.

The catalysed reaction is 2 H2O2 = O2 + 2 H2O. Its function is as follows. Catalase involved in the oxidative stress response serving to protect cells from toxicity. For instance plays a role in defending against oxidative damage induced by excessive copper stress. Not required for maintaining normal lifespan. This chain is Catalase-2, found in Caenorhabditis elegans.